We begin with the raw amino-acid sequence, 283 residues long: Non-selective voltage-gated ion channel VDAC3 (283 aa).

The residue at position 2 (cysteine 2) is an N-acetylcysteine. Threonine 4 is modified (phosphothreonine). An N6-acetyllysine mark is found at lysine 12, lysine 15, and lysine 20. 2 beta stranded membrane-spanning segments follow: residues methionine 26–serine 35 and valine 39–alanine 47. Phosphothreonine is present on threonine 33. A Glycyl lysine isopeptide (Lys-Gly) (interchain with G-Cter in ubiquitin) cross-link involves residue lysine 53. A run of 3 beta stranded transmembrane segments spans residues alanine 54 to valine 64, leucine 69 to asparagine 76, and threonine 80 to asparagine 89. Lysine 90 carries the N6-acetyllysine modification. Residues leucine 95 to valine 104 traverse the membrane as a beta stranded segment. Glycyl lysine isopeptide (Lys-Gly) (interchain with G-Cter in ubiquitin) cross-links involve residues lysine 109 and lysine 110. Beta stranded transmembrane passes span serine 111–arginine 120, phenylalanine 123–aspartate 130, threonine 137–alanine 145, leucine 150–aspartate 158, lysine 163–alanine 175, phenylalanine 178–asparagine 185, glutamate 189–valine 198, isoleucine 202–threonine 211, arginine 218–leucine 227, and threonine 231–asparagine 238. Position 241 is a phosphoserine (serine 241). NAD(+) contacts are provided by residues leucine 242–glycine 244 and serine 260–aspartate 264. The next 2 membrane-spanning stretches (beta stranded) occupy residues leucine 242–leucine 251 and glycine 254–valine 263. Position 266 is an N6-acetyllysine; alternate (lysine 266). Residue lysine 266 forms a Glycyl lysine isopeptide (Lys-Gly) (interchain with G-Cter in ubiquitin); alternate linkage. A beta stranded membrane pass occupies residues histidine 273 to glutamate 282.

The protein belongs to the eukaryotic mitochondrial porin family. Interacts with ARMC12 in a TBC1D21-dependent manner. Interacts with MISFA. In terms of processing, ubiquitinated by PRKN during mitophagy, leading to its degradation and enhancement of mitophagy. Deubiquitinated by USP30. In terms of tissue distribution, isoform 1 is widely expressed with strong expression in atrium and ascitic tumor, lower levels in brain and very low levels in liver and kidney. Isoform 2 is also widely expressed with highest levels in brain but no expression in kidney. Also expressed in flagella of epididymal sperm.

The protein resides in the mitochondrion outer membrane. It is found in the membrane. It catalyses the reaction chloride(in) = chloride(out). The enzyme catalyses K(+)(in) = K(+)(out). In terms of biological role, non-selective voltage-gated ion channel that mediates the transport of anions and cations through the mitochondrion outer membrane and plasma membrane. Forms a high-conducting channel with a stable open state and a voltage-induced closure with a mild preference for anions over cations. Involved in male fertility and sperm mitochondrial sheath formation. This is Non-selective voltage-gated ion channel VDAC3 from Rattus norvegicus (Rat).